Here is a 128-residue protein sequence, read N- to C-terminus: Aspartate 1-decarboxylase (128 aa).

The active-site Schiff-base intermediate with substrate; via pyruvic acid is S25. S25 is subject to Pyruvic acid (Ser). Position 57 (T57) interacts with substrate. Y58 (proton donor) is an active-site residue. 73-75 (GSA) is a substrate binding site.

Belongs to the PanD family. Heterooctamer of four alpha and four beta subunits. It depends on pyruvate as a cofactor. In terms of processing, is synthesized initially as an inactive proenzyme, which is activated by self-cleavage at a specific serine bond to produce a beta-subunit with a hydroxyl group at its C-terminus and an alpha-subunit with a pyruvoyl group at its N-terminus.

The protein resides in the cytoplasm. The enzyme catalyses L-aspartate + H(+) = beta-alanine + CO2. The protein operates within cofactor biosynthesis; (R)-pantothenate biosynthesis; beta-alanine from L-aspartate: step 1/1. Functionally, catalyzes the pyruvoyl-dependent decarboxylation of aspartate to produce beta-alanine. This is Aspartate 1-decarboxylase from Paraburkholderia xenovorans (strain LB400).